The sequence spans 131 residues: Runt-related transcription factor 2 (131 aa).

In terms of domain architecture, Runt spans 1–10 (MRVGVPPQIP). The segment at 1-75 (MRVGVPPQIP…SSTRGTGLPV (75 aa)) is disordered. Residue Arg-11 is modified to Asymmetric dimethylarginine. Composition is skewed to polar residues over residues 13-36 (SLNS…RQAQ) and 43-70 (YDQS…STRG).

In terms of assembly, heterodimer of an alpha and a beta subunit. The alpha subunit binds DNA as a monomer and through the Runt domain. DNA-binding is increased by heterodimerization. Interacts with XRCC6 (Ku70) and XRCC5 (Ku80). Interacts with CCNB1, KAT6A and KAT6B. Interacts with HIVEP3. Interacts with IFI204. Interaction with SATB2; the interaction results in enhanced DNA binding and transactivation by these transcription factors. Binds to HIPK3. Interacts with FOXO1 (via a C-terminal region); the interaction inhibits RUNX2 transcriptional activity towards BGLAP. This interaction is prevented on insulin or IGF1 stimulation as FOXO1 is exported from the nucleus. Interacts with FOXP3. Interacts with TMEM119. Interacts with OLFM2. Interacts with IPO7; the interaction inhibits RUNX2 nuclear translocation in osteoblasts. Post-translationally, phosphorylated; probably by MAP kinases (MAPK). Phosphorylation by HIPK3 is required for the SPEN/MINT and FGF2 transactivation during osteoblastic differentiation.

It localises to the nucleus. The protein localises to the cytoplasm. Transcription factor involved in osteoblastic differentiation and skeletal morphogenesis. Essential for the maturation of osteoblasts and both intramembranous and endochondral ossification. CBF binds to the core site, 5'-PYGPYGGT-3', of a number of enhancers and promoters, including murine leukemia virus, polyomavirus enhancer, T-cell receptor enhancers, osteocalcin, osteopontin, bone sialoprotein, alpha 1(I) collagen, LCK, IL-3 and GM-CSF promoters. Inhibits KAT6B-dependent transcriptional activation. In osteoblasts, supports transcription activation: synergizes with SPEN/MINT to enhance FGFR2-mediated activation of the osteocalcin FGF-responsive element (OCFRE). This Equus caballus (Horse) protein is Runt-related transcription factor 2 (RUNX2).